The following is a 382-amino-acid chain: Sphingoid long-chain base transporter RSB1 (382 aa).

Residues 1–34 (MSNATNNTLGSLLPQLEAAANSNSLYGGMVPNLR) are Extracellular-facing. N-linked (GlcNAc...) asparagine glycosylation is found at N3 and N6. The chain crosses the membrane as a helical span at residues 35–55 (FNITMIVIWGILLTIHVVQLL). Topologically, residues 56 to 57 (MR) are cytoplasmic. Residues 58–78 (QYWFSIAFICTGILEVLGFIG) form a helical membrane-spanning segment. The Extracellular portion of the chain corresponds to 79-90 (RTWSHSNVADMD). The helical transmembrane segment at 91 to 111 (AFLLNMICLTIAPVFTMGGIY) threads the bilayer. The Cytoplasmic portion of the chain corresponds to 112–135 (YQLAKLIEVYGHRFSLLPSPMAYS). A helical membrane pass occupies residues 136 to 156 (FIFICSDIVSLVVQAVGGGLC). The Extracellular segment spans residues 157–171 (GVAVTDGTSTTTGNH). A helical transmembrane segment spans residues 172 to 192 (VFIAGLAIQVASMAIFLMLWF). The Cytoplasmic portion of the chain corresponds to 193 to 241 (HFLFRIYISVRWEHINSRPISLSLLKISQTEVDYLYREKFHFLRLEPKR). Residues 242 to 262 (WVFHYFNLAMTVAVLTIFTRC) form a helical membrane-spanning segment. The Extracellular segment spans residues 263 to 281 (CYRLAELVVGWDGYLITHE). A helical membrane pass occupies residues 282-302 (WYFIILDALMMAIATVTLTIF). Residues 303–382 (HPGFAFKGRS…LFSSKKKAKL (80 aa)) are Cytoplasmic-facing.

This sequence belongs to the lipid-translocating exporter (LTE) (TC 9.A.26.1) family.

It is found in the cell membrane. Its function is as follows. Catalyzes the ATP-dependent translocation of sphingoid long-chain bases (LCBs) from the cytoplasmic site toward the extracytoplasmic side of the membrane (flip-flop). Involved in the establishment of the functional lipid asymmetry of the plasma membrane. Regulates intracellular levels of LCBs, sphingolipid precursors that are growth inhibitory at increased levels. This Saccharomyces cerevisiae (strain AWRI1631) (Baker's yeast) protein is Sphingoid long-chain base transporter RSB1 (RSB1).